A 178-amino-acid polypeptide reads, in one-letter code: Methyltransferase flvH (178 aa).

The Post-SET domain maps to 120–136; it reads QPFNCFCGSQNCLGLIA. Zn(2+)-binding residues include cysteine 124, cysteine 126, and cysteine 131.

The protein belongs to the class V-like SAM-binding methyltransferase superfamily.

It catalyses the reaction L-lysine + 2 S-adenosyl-L-methionine = N(6),N(6)-dimethyl-L-lysine + 2 S-adenosyl-L-homocysteine + 2 H(+). The protein operates within secondary metabolite biosynthesis; terpenoid biosynthesis. Its function is as follows. Methyltransferase; part of the gene cluster that mediates the biosynthesis of flavunoidine, an alkaloidal terpenoid with a tetracyclic cage-like core connected to dimethylcadaverine via a C-N bond and acylated with 5,5-dimethyl-L-pipecolate. The tetracyclic core is synthesized by the terpene cyclase flvE and the cytochrome P450 monooxygenase flvD. The terpene cyclase flvE catalyzes the cyclization of farnesyl pyrophosphate (FPP) to form (1R,4R,5S)-(+)-acoradiene and the cytochrome P450 monooxygenase flvD is then responsible for oxidative conversion of (1R,4R,5S)-(+)-acoradiene into the tetracyclic cage present in the final product flavunoidine. In parallel, the N-methyltransferase flvH dimethylates L-lysine to give N,N-dimethyl-L-Lysin which is decarboxylated by flvG to afford dimethylcadaverine. The terpene cyclase-like protein flvF is the enzyme that attaches the dimethylcadaverine precusor at the C-7 of the tetracyclic cage to yield pre-flavunoidine. The cytochrome monooxygenase flvC hydroxylates the C-10 position of pre-flavunoidine whereas the NRPS flvI acylates the terpenoid core at the hydroxylated C-10 with dimethylpipecolate to yield final flavunoidine. The bifunctional enzyme flvA and the dehydrogenase flvB are responsible for the synthesis of the dimethylpipecolate precursor. The PLP-dependent lyase domain of flvA might use L-O-acetyl-homoserine and alpha-keto-isovalerate to form an intermediary ketone that can cyclize intramolecularly to yield an imine. The imine can be reduced by flvB to yield the 6-carboxylated pipecolate. The C-terminal alpha-KG-dependent oxygenase domain of flvA is then proposed to catalyze the decarboxylation to yield dimethylpipecolate. This chain is Methyltransferase flvH, found in Aspergillus flavus (strain ATCC 200026 / FGSC A1120 / IAM 13836 / NRRL 3357 / JCM 12722 / SRRC 167).